Consider the following 245-residue polypeptide: tRNA1(Val) (adenine(37)-N6)-methyltransferase (245 aa).

The protein belongs to the methyltransferase superfamily. tRNA (adenine-N(6)-)-methyltransferase family.

It is found in the cytoplasm. The catalysed reaction is adenosine(37) in tRNA1(Val) + S-adenosyl-L-methionine = N(6)-methyladenosine(37) in tRNA1(Val) + S-adenosyl-L-homocysteine + H(+). In terms of biological role, specifically methylates the adenine in position 37 of tRNA(1)(Val) (anticodon cmo5UAC). The chain is tRNA1(Val) (adenine(37)-N6)-methyltransferase from Klebsiella pneumoniae subsp. pneumoniae (strain ATCC 700721 / MGH 78578).